The chain runs to 490 residues: Betaine aldehyde dehydrogenase (490 aa).

Asp-93 contributes to the K(+) binding site. Residue 150–152 (GAW) coordinates NAD(+). The active-site Charge relay system is the Lys-162. 176–179 (KPSE) serves as a coordination point for NAD(+). Val-180 contributes to the K(+) binding site. Residue 230 to 233 (GIAS) coordinates NAD(+). Leu-246 contacts K(+). Glu-252 (proton acceptor) is an active-site residue. Positions 254, 286, and 387 each coordinate NAD(+). Cys-286 acts as the Nucleophile in catalysis. Cys-286 carries the post-translational modification Cysteine sulfenic acid (-SOH). The K(+) site is built by Lys-457 and Gly-460. The Charge relay system role is filled by Glu-464.

Belongs to the aldehyde dehydrogenase family. As to quaternary structure, dimer of dimers. K(+) is required as a cofactor.

It catalyses the reaction betaine aldehyde + NAD(+) + H2O = glycine betaine + NADH + 2 H(+). It participates in amine and polyamine biosynthesis; betaine biosynthesis via choline pathway; betaine from betaine aldehyde: step 1/1. Functionally, involved in the biosynthesis of the osmoprotectant glycine betaine. Catalyzes the irreversible oxidation of betaine aldehyde to the corresponding acid. This Yersinia pseudotuberculosis serotype O:1b (strain IP 31758) protein is Betaine aldehyde dehydrogenase.